Here is a 639-residue protein sequence, read N- to C-terminus: MGRIIGIDLGTTNSCVAVLDGEKAKVIENAEGDRTTPSIIAYSQDGETLVGQPAKRQAITNPKNTLFAIKRLIGRRFEDKEVQRDIDIMPFDIIKADNGDAWVQAKDEKLAPPQISAEVLKKMKKTAEDYLGEEVTAAVITVPAYFNDSQRQATKDAGRIAGLEVKRIINEPTAAALAYGMDKKKGDSVVAVYDLGGGTFDISIIEIDEADGEHTFEVLATNGDTHLGGEDFDNQVINYLVEEFKKDSGMDLRKDPLAMQRLKEAGEKAKIELSSAQQTEVNLPYITADASGPKHLTIKLTRAKLESLVEKMVKATLEPLKQALADADLSVGDINDIILVGGQTRMPLVQKYVTEFFGKEPRKDVNPDEAVAVGAAIQGGVLSGDVKDVLLLDVTPLSLGIETMGGVMTALIEKNTTVPTKKSQTFSTAEDNQSAVTVHVLQGERKQAAGNKSLGQFNLEGIRPAQRGAPQIEVTFDIDADGILHVSAKDKDTNKEQKITIKASSGLSDDEVEKMVQDAEANKEADKQFEEMVQARNQADGLIHGTRKQVEEAGDALSDEDKAEIEAAVVALEEAVKAGEKEAIESKTQELIQASAKLMEVAQAQQAAAGAEGQPEDASAKQDDDVVDAEFEEVKDDKK.

Thr199 carries the phosphothreonine; by autocatalysis modification. Positions 602 to 613 (AQAQQAAAGAEG) are enriched in low complexity. The disordered stretch occupies residues 602–639 (AQAQQAAAGAEGQPEDASAKQDDDVVDAEFEEVKDDKK). Over residues 625-639 (DVVDAEFEEVKDDKK) the composition is skewed to acidic residues.

Belongs to the heat shock protein 70 family.

Acts as a chaperone. The protein is Chaperone protein DnaK of Pseudoalteromonas atlantica (strain T6c / ATCC BAA-1087).